The primary structure comprises 491 residues: Probable Xaa-Pro aminopeptidase AFLA_084750 (491 aa).

Residues Asp-271, Asp-282, Glu-419, and Glu-458 each coordinate Mn(2+).

Belongs to the peptidase M24B family. The cofactor is Mn(2+).

The catalysed reaction is Release of any N-terminal amino acid, including proline, that is linked to proline, even from a dipeptide or tripeptide.. Catalyzes the removal of a penultimate prolyl residue from the N-termini of peptides. This chain is Probable Xaa-Pro aminopeptidase AFLA_084750, found in Aspergillus flavus (strain ATCC 200026 / FGSC A1120 / IAM 13836 / NRRL 3357 / JCM 12722 / SRRC 167).